The primary structure comprises 650 residues: Fructose-1,6-bisphosphatase class 3 (650 aa).

The protein belongs to the FBPase class 3 family. It depends on Mn(2+) as a cofactor.

The catalysed reaction is beta-D-fructose 1,6-bisphosphate + H2O = beta-D-fructose 6-phosphate + phosphate. It participates in carbohydrate biosynthesis; gluconeogenesis. This chain is Fructose-1,6-bisphosphatase class 3, found in Finegoldia magna (strain ATCC 29328 / DSM 20472 / WAL 2508) (Peptostreptococcus magnus).